Consider the following 219-residue polypeptide: Cytidylate kinase (219 aa).

Position 9–17 (9–17) interacts with ATP; that stretch reads GPAGSGKTT.

The protein belongs to the cytidylate kinase family. Type 1 subfamily.

It is found in the cytoplasm. It carries out the reaction CMP + ATP = CDP + ADP. The enzyme catalyses dCMP + ATP = dCDP + ADP. The sequence is that of Cytidylate kinase from Fervidobacterium nodosum (strain ATCC 35602 / DSM 5306 / Rt17-B1).